A 336-amino-acid polypeptide reads, in one-letter code: Adenosine deaminase (336 aa).

The Zn(2+) site is built by histidine 15 and histidine 17. Positions 17, 19, and 172 each coordinate substrate. Histidine 199 lines the Zn(2+) pocket. Residue glutamate 202 is the Proton donor of the active site. Zn(2+) is bound at residue aspartate 279.

The protein belongs to the metallo-dependent hydrolases superfamily. Adenosine and AMP deaminases family. Adenosine deaminase subfamily. Requires Zn(2+) as cofactor.

The catalysed reaction is adenosine + H2O + H(+) = inosine + NH4(+). It carries out the reaction 2'-deoxyadenosine + H2O + H(+) = 2'-deoxyinosine + NH4(+). Catalyzes the hydrolytic deamination of adenosine and 2-deoxyadenosine. In Streptococcus thermophilus (strain ATCC BAA-250 / LMG 18311), this protein is Adenosine deaminase.